A 622-amino-acid chain; its full sequence is Pesticidal crystal protein Cry2Ac (622 aa).

It belongs to the delta endotoxin family.

Functionally, promotes colloidosmotic lysis by binding to the midgut epithelial cells of lepidopteran larvae. Has low activity on dipteran larvae. The protein is Pesticidal crystal protein Cry2Ac (cry2Ac) of Bacillus thuringiensis.